Reading from the N-terminus, the 61-residue chain is DNA-directed RNA polymerase subunit Rpo10 (61 aa).

Positions 6, 9, 42, and 43 each coordinate Zn(2+).

Belongs to the archaeal Rpo10/eukaryotic RPB10 RNA polymerase subunit family. Part of the RNA polymerase complex. Zn(2+) is required as a cofactor.

Its subcellular location is the cytoplasm. It carries out the reaction RNA(n) + a ribonucleoside 5'-triphosphate = RNA(n+1) + diphosphate. DNA-dependent RNA polymerase (RNAP) catalyzes the transcription of DNA into RNA using the four ribonucleoside triphosphates as substrates. This chain is DNA-directed RNA polymerase subunit Rpo10, found in Methanothrix thermoacetophila (strain DSM 6194 / JCM 14653 / NBRC 101360 / PT) (Methanosaeta thermophila).